The chain runs to 249 residues: MGVAFDKCDTRPAHIDAILNGLDRYNPETTTVFQDYVVQQCEERTFDCYANLALLKLYQFNPHLLQPETVTNILAKALTVFPSPAFSLCLALLPAHTQPFPTADTDASQTSDFVESIQKLARLSTLLESAQYAQFWSTLNSDDLYADLVADVAGFEELVRIRIAIEVGKAFREINAEVLEQWLDLRSREALEKFVTEVCSWEVDKTGPNGTVVKVPTNKENEARSEVKSERVGVEMFGRVIRRGFEQAA.

Residues 46-222 enclose the PCI domain; that stretch reads FDCYANLALL…VKVPTNKENE (177 aa).

This sequence belongs to the eIF-3 subunit K family. In terms of assembly, component of the eukaryotic translation initiation factor 3 (eIF-3) complex.

It is found in the cytoplasm. Functionally, component of the eukaryotic translation initiation factor 3 (eIF-3) complex, which is involved in protein synthesis of a specialized repertoire of mRNAs and, together with other initiation factors, stimulates binding of mRNA and methionyl-tRNAi to the 40S ribosome. The eIF-3 complex specifically targets and initiates translation of a subset of mRNAs involved in cell proliferation. In Aspergillus fumigatus (strain CBS 144.89 / FGSC A1163 / CEA10) (Neosartorya fumigata), this protein is Eukaryotic translation initiation factor 3 subunit K.